A 263-amino-acid polypeptide reads, in one-letter code: Endonuclease NucS (263 aa).

It belongs to the NucS endonuclease family.

It is found in the cytoplasm. In terms of biological role, cleaves both 3' and 5' ssDNA extremities of branched DNA structures. This Methanocaldococcus jannaschii (strain ATCC 43067 / DSM 2661 / JAL-1 / JCM 10045 / NBRC 100440) (Methanococcus jannaschii) protein is Endonuclease NucS.